The following is a 712-amino-acid chain: tRNA 5-methylaminomethyl-2-thiouridine biosynthesis bifunctional protein MnmC (712 aa).

Residues 1–268 are tRNA (mnm(5)s(2)U34)-methyltransferase; the sequence is MPNMRHRVNS…RRALRHAQSD (268 aa). An FAD-dependent cmnm(5)s(2)U34 oxidoreductase region spans residues 292 to 712; the sequence is IGGGVASTHL…MRKLIKGKAL (421 aa).

The protein in the N-terminal section; belongs to the methyltransferase superfamily. tRNA (mnm(5)s(2)U34)-methyltransferase family. In the C-terminal section; belongs to the DAO family. The cofactor is FAD.

It localises to the cytoplasm. The enzyme catalyses 5-aminomethyl-2-thiouridine(34) in tRNA + S-adenosyl-L-methionine = 5-methylaminomethyl-2-thiouridine(34) in tRNA + S-adenosyl-L-homocysteine + H(+). Functionally, catalyzes the last two steps in the biosynthesis of 5-methylaminomethyl-2-thiouridine (mnm(5)s(2)U) at the wobble position (U34) in tRNA. Catalyzes the FAD-dependent demodification of cmnm(5)s(2)U34 to nm(5)s(2)U34, followed by the transfer of a methyl group from S-adenosyl-L-methionine to nm(5)s(2)U34, to form mnm(5)s(2)U34. This Shewanella sediminis (strain HAW-EB3) protein is tRNA 5-methylaminomethyl-2-thiouridine biosynthesis bifunctional protein MnmC.